The primary structure comprises 871 residues: Zinc finger protein 473 (871 aa).

One can recognise a KRAB domain in the interval 6-75 (VTLKDVGMDF…AGGSPEATSP (70 aa)). 2 disordered regions span residues 47–81 (PPRPNLTSHPDGSEDLEPLAGGSPEATSPDVTETK) and 140–164 (NGESPTECKSHELKRGLSPVSTVST). Polar residues predominate over residues 71–81 (EATSPDVTETK). A compositionally biased stretch (basic and acidic residues) spans 145–154 (TECKSHELKR). Lys148 is covalently cross-linked (Glycyl lysine isopeptide (Lys-Gly) (interchain with G-Cter in SUMO2)). A C2H2-type 1 zinc finger spans residues 209-231 (YQCSECGKSFSGSYRLTQHWITH). Residues 265–286 (YVCNEYGTTFSQSTYLWHQKTH) form a C2H2-type 2; degenerate zinc finger. Over residues 290-317 (KPCKSQDSDHPPSHDTQPGEHQKTHTDS) the composition is skewed to basic and acidic residues. Residues 290-318 (KPCKSQDSDHPPSHDTQPGEHQKTHTDSK) form a disordered region. Positions 312–552 (KTHTDSKSYN…GFFVSGKILD (241 aa)) are interaction with SLBP/pre-mRNA complex. C2H2-type zinc fingers lie at residues 320-342 (YNCNECGKAFTRIFHLTRHQKIH), 347-369 (YECSKCQATFNLRKHLIQHQKTH), and 375-397 (SECQECGKIFRHSSLLIEHQALH). The segment at 403-425 (YKCNERGKSFRHNSTLKIHQRVH) adopts a C2H2-type 6; degenerate zinc-finger fold. A Glycyl lysine isopeptide (Lys-Gly) (interchain with G-Cter in SUMO2) cross-link involves residue Lys419. C2H2-type zinc fingers lie at residues 431–453 (YKCSECGKAFHRHTHLNEHRRIH), 459–481 (HKCQECVRSFSRPSHLMRHQAIH), 487–509 (YSCAECKETFSDNNRLVQHQKMH), and 515–537 (YECQECGERFICGSTLKCHESVH). Residues Lys549 and Lys558 each participate in a glycyl lysine isopeptide (Lys-Gly) (interchain with G-Cter in SUMO2) cross-link. 2 consecutive C2H2-type zinc fingers follow at residues 562–584 (FKCNKCEKTFSCSKYLTQHERIH) and 591–613 (FECDQCGKAFGQSTRLIHHQRIH). A Glycyl lysine isopeptide (Lys-Gly) (interchain with G-Cter in SUMO2) cross-link involves residue Lys635. 8 consecutive C2H2-type zinc fingers follow at residues 646–668 (FKCNECGKTFSHSAHLSKHQLIH), 674–696 (FKCSKCDRVFTQRNYLVQHERTH), 702–724 (LVCNECGKTFRQSSCLSKHQRIH), 730–752 (YVCDYCGKAFGLSAELVRHQRIH), 758–780 (YVCQECGKAFTQSSCLSIHRRVH), 786–808 (YRCGECGKAFAQKANLTQHQRIH), 814–836 (YSCNVCGKAFVLSAHLNQHLRVH), and 842–864 (YQCQRCQKAFRCHSSLSRHQRVH).

Belongs to the krueppel C2H2-type zinc-finger protein family. As to quaternary structure, interacts with the SLBP/pre-mRNA complex but not with SLBP alone. Interacts with LSM11 in a U7 snRNP-dependent manner.

It localises to the nucleus. Involved in histone 3'-end pre-mRNA processing by associating with U7 snRNP and interacting with SLBP/pre-mRNA complex. Increases histone 3'-end pre-mRNA processing but has no effect on U7 snRNP levels, when overexpressed. Required for cell cycle progression from G1 to S phases. In Homo sapiens (Human), this protein is Zinc finger protein 473 (ZNF473).